The chain runs to 302 residues: MFEWTWHLEWQTPQEFHAHAIKRILIEERSEFQRVILAELFRFGKALIIDGKIQSTLADEFIYHESLVHPLLISLEDPENILILGGGEGATLREALRYKSVRKVTMVDIDPVVIKFAKQNLQEWHMGSFDDSRTNLIIGDGYKFVKETNEKYNAIILDLTDPIQDSPSQLLYTSEFYRDLKSIITPNGGLVTQATSPSFSLDTFAIIYSTLKTVFKNVSAGITYVPSFDGLWGFIYASDVTNPAHLNRNQINDRIKERVTGSLRFYDGETHEMLFRVPKYIREKIENEKRVSTRENPVATPA.

The region spanning 4–239 (WTWHLEWQTP…GLWGFIYASD (236 aa)) is the PABS domain. Gln33 lines the S-methyl-5'-thioadenosine pocket. Residues His64 and Glu88 each contribute to the spermidine site. S-methyl-5'-thioadenosine is bound by residues Asp108 and 140–141 (DG). Residue Asp158 is the Proton acceptor of the active site. Position 167 (Pro167) interacts with S-methyl-5'-thioadenosine.

This sequence belongs to the spermidine/spermine synthase family. As to quaternary structure, homodimer or homotetramer.

The protein resides in the cytoplasm. The catalysed reaction is S-adenosyl 3-(methylsulfanyl)propylamine + putrescine = S-methyl-5'-thioadenosine + spermidine + H(+). The protein operates within amine and polyamine biosynthesis; spermidine biosynthesis; spermidine from putrescine: step 1/1. Its function is as follows. Catalyzes the irreversible transfer of a propylamine group from the amino donor S-adenosylmethioninamine (decarboxy-AdoMet) to putrescine (1,4-diaminobutane) to yield spermidine. The polypeptide is Polyamine aminopropyltransferase (Sulfolobus acidocaldarius (strain ATCC 33909 / DSM 639 / JCM 8929 / NBRC 15157 / NCIMB 11770)).